The primary structure comprises 367 residues: Alanine racemase (367 aa).

Residue K35 is the Proton acceptor; specific for D-alanine of the active site. The residue at position 35 (K35) is an N6-(pyridoxal phosphate)lysine. Substrate is bound at residue R130. The Proton acceptor; specific for L-alanine role is filled by Y256. M304 lines the substrate pocket.

It belongs to the alanine racemase family. Pyridoxal 5'-phosphate is required as a cofactor.

The catalysed reaction is L-alanine = D-alanine. It participates in amino-acid biosynthesis; D-alanine biosynthesis; D-alanine from L-alanine: step 1/1. In terms of biological role, catalyzes the interconversion of L-alanine and D-alanine. May also act on other amino acids. The chain is Alanine racemase (alr) from Methylibium petroleiphilum (strain ATCC BAA-1232 / LMG 22953 / PM1).